The primary structure comprises 61 residues: Small ribosomal subunit protein uS14 (61 aa).

Zn(2+)-binding residues include cysteine 24, cysteine 27, cysteine 40, and cysteine 43.

It belongs to the universal ribosomal protein uS14 family. Zinc-binding uS14 subfamily. In terms of assembly, part of the 30S ribosomal subunit. Contacts proteins S3 and S10. It depends on Zn(2+) as a cofactor.

Functionally, binds 16S rRNA, required for the assembly of 30S particles and may also be responsible for determining the conformation of the 16S rRNA at the A site. This is Small ribosomal subunit protein uS14 from Dictyoglomus thermophilum (strain ATCC 35947 / DSM 3960 / H-6-12).